The sequence spans 464 residues: ATP synthase subunit beta (464 aa).

152-159 (GGAGVGKT) provides a ligand contact to ATP.

Belongs to the ATPase alpha/beta chains family. In terms of assembly, F-type ATPases have 2 components, CF(1) - the catalytic core - and CF(0) - the membrane proton channel. CF(1) has five subunits: alpha(3), beta(3), gamma(1), delta(1), epsilon(1). CF(0) has three main subunits: a(1), b(2) and c(9-12). The alpha and beta chains form an alternating ring which encloses part of the gamma chain. CF(1) is attached to CF(0) by a central stalk formed by the gamma and epsilon chains, while a peripheral stalk is formed by the delta and b chains.

The protein localises to the cell membrane. It carries out the reaction ATP + H2O + 4 H(+)(in) = ADP + phosphate + 5 H(+)(out). Functionally, produces ATP from ADP in the presence of a proton gradient across the membrane. The catalytic sites are hosted primarily by the beta subunits. The sequence is that of ATP synthase subunit beta from Ureaplasma parvum serovar 3 (strain ATCC 27815 / 27 / NCTC 11736).